Here is a 505-residue protein sequence, read N- to C-terminus: L-carnitine/gamma-butyrobetaine antiporter (505 aa).

12 helical membrane-spanning segments follow: residues 10-30 (IEPK…WLTV), 50-70 (IWGW…FWLV), 92-112 (IFMM…SIEI), 143-163 (GPLP…FFFV), 195-215 (FYLV…TPLV), 231-251 (LDAI…ACGL), 263-283 (SYLS…SFIM), 316-336 (WTVF…IFLA), 347-367 (LCFG…TVLG), 403-423 (FSTA…VTLI), 446-466 (LLVR…LLAL), and 475-495 (AIIA…LSFI).

This sequence belongs to the BCCT transporter (TC 2.A.15) family. CaiT subfamily. In terms of assembly, homotrimer.

Its subcellular location is the cell inner membrane. It catalyses the reaction 4-(trimethylamino)butanoate(in) + (R)-carnitine(out) = 4-(trimethylamino)butanoate(out) + (R)-carnitine(in). Its pathway is amine and polyamine metabolism; carnitine metabolism. Functionally, catalyzes the exchange of L-carnitine for gamma-butyrobetaine. The chain is L-carnitine/gamma-butyrobetaine antiporter from Citrobacter koseri (strain ATCC BAA-895 / CDC 4225-83 / SGSC4696).